A 317-amino-acid chain; its full sequence is Beta-ketoacyl-[acyl-carrier-protein] synthase III (317 aa).

Active-site residues include C112 and H244. An ACP-binding region spans residues 245-249 (QANLR). Residue N274 is part of the active site.

It belongs to the thiolase-like superfamily. FabH family. As to quaternary structure, homodimer.

It localises to the cytoplasm. It carries out the reaction malonyl-[ACP] + acetyl-CoA + H(+) = 3-oxobutanoyl-[ACP] + CO2 + CoA. Its pathway is lipid metabolism; fatty acid biosynthesis. Functionally, catalyzes the condensation reaction of fatty acid synthesis by the addition to an acyl acceptor of two carbons from malonyl-ACP. Catalyzes the first condensation reaction which initiates fatty acid synthesis and may therefore play a role in governing the total rate of fatty acid production. Possesses both acetoacetyl-ACP synthase and acetyl transacylase activities. Its substrate specificity determines the biosynthesis of branched-chain and/or straight-chain of fatty acids. The chain is Beta-ketoacyl-[acyl-carrier-protein] synthase III from Shigella boydii serotype 4 (strain Sb227).